Reading from the N-terminus, the 268-residue chain is Eukaryotic translation initiation factor 3 subunit G-2 (268 aa).

The RRM domain occupies 187–265 (SAVRISNLSE…LILCVEWSKP (79 aa)).

It belongs to the eIF-3 subunit G family. Component of the eukaryotic translation initiation factor 3 (eIF-3) complex. The eIF-3 complex interacts with pix.

It localises to the cytoplasm. RNA-binding component of the eukaryotic translation initiation factor 3 (eIF-3) complex, which is involved in protein synthesis of a specialized repertoire of mRNAs and, together with other initiation factors, stimulates binding of mRNA and methionyl-tRNAi to the 40S ribosome. The eIF-3 complex specifically targets and initiates translation of a subset of mRNAs involved in cell proliferation. This subunit can bind 18S rRNA. This chain is Eukaryotic translation initiation factor 3 subunit G-2, found in Drosophila willistoni (Fruit fly).